The following is an 89-amino-acid chain: Dynein light chain (89 aa).

This sequence belongs to the dynein light chain family. Tegument.

It localises to the cytoplasm. The protein resides in the cytoskeleton. In terms of biological role, acts as a non-catalytic accessory component of a dynein complex. This chain is Dynein light chain (DLC), found in Schistosoma mansoni (Blood fluke).